The primary structure comprises 561 residues: Tetracenomycin A2 monooxygenase-dioxygenase (561 aa).

Residues leucine 15, glutamate 35, glutamine 128, and methionine 152 each contribute to the FAD site. Tyrosine 231 functions as the Proton acceptor in the catalytic mechanism. Aspartate 322 contributes to the FAD binding site.

This sequence belongs to the PheA/TfdB FAD monooxygenase family. Monomer. May form oligomers up to homohexamers. It depends on FAD as a cofactor.

The catalysed reaction is tetracenomycin A2 + 2 NADPH + 2 O2 + 2 H(+) = tetracenomycin C + 2 NADP(+) + H2O. It participates in antibiotic biosynthesis; tetracenomycin C biosynthesis. Involved in the biosynthesis of tetracenomycin C (TCM C). Catalyzes the triple hydroxylation of tetracenomycin A2 (TCM A2) at positions C-4, C-4a and C-12a to give tetracenomycin C (TCM C). Can use either NADH or NADPH as electron donors, but prefers NADPH under physiological conditions. The polypeptide is Tetracenomycin A2 monooxygenase-dioxygenase (Streptomyces glaucescens).